Here is a 344-residue protein sequence, read N- to C-terminus: tRNA N6-adenosine threonylcarbamoyltransferase (344 aa).

Fe cation contacts are provided by histidine 112 and histidine 116. Substrate-binding positions include 135–139, aspartate 168, glycine 181, and asparagine 271; that span reads LVSGG. Aspartate 299 serves as a coordination point for Fe cation. The segment at 323 to 344 is disordered; sequence RARPRWPLDPEAEPVRGAGVKA.

Belongs to the KAE1 / TsaD family. Requires Fe(2+) as cofactor.

Its subcellular location is the cytoplasm. The enzyme catalyses L-threonylcarbamoyladenylate + adenosine(37) in tRNA = N(6)-L-threonylcarbamoyladenosine(37) in tRNA + AMP + H(+). Its function is as follows. Required for the formation of a threonylcarbamoyl group on adenosine at position 37 (t(6)A37) in tRNAs that read codons beginning with adenine. Is involved in the transfer of the threonylcarbamoyl moiety of threonylcarbamoyl-AMP (TC-AMP) to the N6 group of A37, together with TsaE and TsaB. TsaD likely plays a direct catalytic role in this reaction. The protein is tRNA N6-adenosine threonylcarbamoyltransferase of Erythrobacter litoralis (strain HTCC2594).